The chain runs to 155 residues: D-aminoacyl-tRNA deacylase (155 aa).

Residues 137-138 carry the Gly-cisPro motif, important for rejection of L-amino acids motif; sequence GP.

It belongs to the DTD family. As to quaternary structure, homodimer.

It is found in the cytoplasm. It catalyses the reaction glycyl-tRNA(Ala) + H2O = tRNA(Ala) + glycine + H(+). The catalysed reaction is a D-aminoacyl-tRNA + H2O = a tRNA + a D-alpha-amino acid + H(+). An aminoacyl-tRNA editing enzyme that deacylates mischarged D-aminoacyl-tRNAs. Also deacylates mischarged glycyl-tRNA(Ala), protecting cells against glycine mischarging by AlaRS. Acts via tRNA-based rather than protein-based catalysis; rejects L-amino acids rather than detecting D-amino acids in the active site. By recycling D-aminoacyl-tRNA to D-amino acids and free tRNA molecules, this enzyme counteracts the toxicity associated with the formation of D-aminoacyl-tRNA entities in vivo and helps enforce protein L-homochirality. The protein is D-aminoacyl-tRNA deacylase of Paracidovorax citrulli (strain AAC00-1) (Acidovorax citrulli).